A 490-amino-acid polypeptide reads, in one-letter code: MDKVTDNSPDVESTESTEGSFPTVGVDTGDTITATLATGTENVGGGGGAFGGASESSAAIHATAKWSTAQLKKHQAEQAARAAAAEAALAKAKSQRDALTQRLKDIVNDALRANAARSPSVTDLAHANNMAMQAEAERLRLAKAEQKAREEAEAAEKALREAERQRDEIARQQAETAHLLAMAEAAEAEKNRQDSLDEEHRAVEVAEKKLAEAKAELAKAESDVQSKQAIVSRVAGELENAQKSVDVKVTGFPGWRDVQKKLERQLQDKKNEYSSVTNALNSAVSIRDAKKTDVQNAEIKLKEAKDALEKSQVKDSVDTMVGFYQYITEQYGEKYSRIAQDLAEKAKGSKFSSVDEALAAFEKYKNVLDKKISKVDRDAIFNALESVNYDELSKNLTKISKSLKITSRVSFLYDVGSDFKNAIETGNWRPLFVTLEKSAVDVGVAKIVALMFSFIVGVPLGFWGIAIVTGIVSSYIGDDELNKLNELLGI.

The segment covering 1 to 20 (MDKVTDNSPDVESTESTEGS) has biased composition (polar residues). 2 disordered regions span residues 1 to 29 (MDKV…VDTG) and 146 to 171 (QKAR…EIAR). Basic and acidic residues predominate over residues 146 to 170 (QKAREEAEAAEKALREAERQRDEIA). Residues 447–467 (IVALMFSFIVGVPLGFWGIAI) traverse the membrane as a helical segment.

It belongs to the channel forming colicin family.

It localises to the host membrane. Its function is as follows. This colicin is a channel-forming colicin. This class of transmembrane toxins depolarize the cytoplasmic membrane, leading to dissipation of cellular energy. Functionally, colicins are polypeptide toxins produced by and active against E.coli and closely related bacteria. This chain is Colicin-5 (cfa), found in Escherichia coli.